The following is a 1657-amino-acid chain: A disintegrin and metalloproteinase with thrombospondin motifs 7 (1657 aa).

A signal peptide spans 1 to 20; that stretch reads MHRGPSLLLILCALASRVLG. A propeptide spanning residues 21–220 is cleaved from the precursor; that stretch reads PASGLVTEGR…QQQQKRRQQR (200 aa). Asn-84 carries N-linked (GlcNAc...) asparagine glycosylation. The tract at residues 165-221 is disordered; it reads PGHAQPHVVYKHQGSRKQAQQGDSRPSGTCGMQVPPDLEQQREHWEQQQQKRRQQRS. The span at 180-191 shows a compositional bias: polar residues; sequence RKQAQQGDSRPS. A Cysteine switch motif is present at residues 192–199; sequence GTCGMQVP. Cys-194 provides a ligand contact to Zn(2+). The region spanning 226 to 437 is the Peptidase M12B domain; that stretch reads KWVETLVVAD…GWGLCLDDRP (212 aa). 11 disulfides stabilise this stretch: Cys-302/Cys-356, Cys-331/Cys-338, Cys-350/Cys-432, Cys-389/Cys-416, Cys-459/Cys-482, Cys-470/Cys-488, Cys-477/Cys-507, Cys-501/Cys-512, Cys-535/Cys-572, Cys-539/Cys-577, and Cys-550/Cys-562. His-372 serves as a coordination point for Zn(2+). Glu-373 is a catalytic residue. The Zn(2+) site is built by His-376 and His-382. The region spanning 447–522 is the Disintegrin domain; the sequence is VLPGVLYDVN…VPEGFQPEAV (76 aa). Positions 523 to 578 constitute a TSP type-1 1 domain; the sequence is DGGWSGWSAWSDCSRSCGVGVRSSERQCTQPVPKNRGKYCVGERKRSQLCNLPACP. Asn-622 carries N-linked (GlcNAc...) asparagine glycosylation. The tract at residues 683-794 is spacer; the sequence is QTVSRTFKET…PGVHYQYTIQ (112 aa). 3 consecutive TSP type-1 domains span residues 804 to 863, 864 to 923, and 925 to 978; these read PEFS…EPCP, PRWW…NRHV, and CPST…QPCQ. Disordered stretches follow at residues 1009-1034, 1073-1127, 1140-1237, 1283-1304, and 1317-1384; these read LAPRPSPASSPKPVSISNAIDEEELD, GGWT…GLEQ, EDTP…DVVE, GRDSPLEPGTPTFSSPELSSQH, and TVPT…ARNA. Residues 1211-1224 show a composition bias toward pro residues; it reads PQSPIPTQPSPPSI. Polar residues-rich tracts occupy residues 1293–1304 and 1327–1342; these read PTFSSPELSSQH and PSGQPQTPNLEGTQSP. 4 TSP type-1 domains span residues 1366–1414, 1417–1477, 1479–1522, and 1524–1584; these read QPSL…SGND, CTLA…CQPG, TKPP…PEPG, and CEES…LCSH. The 41-residue stretch at 1587-1627 folds into the PLAC domain; that stretch reads WPESSRPCATEDCELVEPPRCERDRLSFNFCETLRLLGRCQ.

In terms of assembly, interacts with COMP. Requires Zn(2+) as cofactor. In terms of processing, N-glycosylated. Can be O-fucosylated by POFUT2 on a serine or a threonine residue found within the consensus sequence C1-X(2)-(S/T)-C2-G of the TSP type-1 repeat domains where C1 and C2 are the first and second cysteine residue of the repeat, respectively. Fucosylated repeats can then be further glycosylated by the addition of a beta-1,3-glucose residue by the glucosyltransferase, B3GALTL. Fucosylation mediates the efficient secretion of ADAMTS family members. Can also be C-glycosylated with one or two mannose molecules on tryptophan residues within the consensus sequence W-X-X-W of the TPRs. N- and C-glycosylations can also facilitate secretion. O-glycosylated proteoglycan; contains chondroitin sulfate. Post-translationally, may be cleaved by a furin endopeptidase. The precursor is sequentially processed.

The protein localises to the secreted. The protein resides in the extracellular space. It is found in the extracellular matrix. Its function is as follows. Metalloprotease. Was previously shown to degrade COMP. However, a later study found no activity against COMP. The polypeptide is A disintegrin and metalloproteinase with thrombospondin motifs 7 (Adamts7) (Mus musculus (Mouse)).